The following is a 102-amino-acid chain: Class I hydrophobin 1 (102 aa).

The first 18 residues, 1–18, serve as a signal peptide directing secretion; sequence MSLFKILVAAATVATALA. Intrachain disulfides connect Cys-37–Cys-84, Cys-45–Cys-78, Cys-46–Cys-63, and Cys-85–Cys-97.

Belongs to the fungal hydrophobin family.

It localises to the secreted. Its subcellular location is the cell wall. Aerial growth, conidiation, and dispersal of filamentous fungi in the environment rely upon a capability of their secreting small amphipathic proteins called hydrophobins (HPBs) with low sequence identity. Class I can self-assemble into an outermost layer of rodlet bundles on aerial cell surfaces, conferring cellular hydrophobicity that supports fungal growth, development and dispersal; whereas Class II form highly ordered films at water-air interfaces through intermolecular interactions but contribute nothing to the rodlet structure. Hyd1 is essential for stress tolerance, conidial hydrophobicity, adhesion to insect cuticle, and insect infectivity/pathogenicity. Plays a neglectable role in hyphal growth and asexual development. The polypeptide is Class I hydrophobin 1 (Metarhizium robertsii (strain ARSEF 23 / ATCC MYA-3075) (Metarhizium anisopliae (strain ARSEF 23))).